Consider the following 82-residue polypeptide: Small ribosomal subunit protein bS16 (82 aa).

The protein belongs to the bacterial ribosomal protein bS16 family.

The protein is Small ribosomal subunit protein bS16 of Shigella boydii serotype 18 (strain CDC 3083-94 / BS512).